Reading from the N-terminus, the 147-residue chain is Large ribosomal subunit protein bL9 (147 aa).

It belongs to the bacterial ribosomal protein bL9 family.

In terms of biological role, binds to the 23S rRNA. In Geotalea uraniireducens (strain Rf4) (Geobacter uraniireducens), this protein is Large ribosomal subunit protein bL9.